The chain runs to 149 residues: 3-hydroxyacyl-[acyl-carrier-protein] dehydratase FabZ (149 aa).

Histidine 53 is a catalytic residue.

Belongs to the thioester dehydratase family. FabZ subfamily.

It is found in the cytoplasm. It carries out the reaction a (3R)-hydroxyacyl-[ACP] = a (2E)-enoyl-[ACP] + H2O. In terms of biological role, involved in unsaturated fatty acids biosynthesis. Catalyzes the dehydration of short chain beta-hydroxyacyl-ACPs and long chain saturated and unsaturated beta-hydroxyacyl-ACPs. The chain is 3-hydroxyacyl-[acyl-carrier-protein] dehydratase FabZ from Neisseria gonorrhoeae (strain ATCC 700825 / FA 1090).